Here is a 161-residue protein sequence, read N- to C-terminus: UPF0506 protein SJCHGC02965 (161 aa).

Positions 1–13 are cleaved as a signal peptide; the sequence is QLLILCLVTVINS. 9 N-linked (GlcNAc...) asparagine glycosylation sites follow: asparagine 15, asparagine 19, asparagine 31, asparagine 43, asparagine 47, asparagine 59, asparagine 63, asparagine 75, and asparagine 121. Disulfide bonds link cysteine 127–cysteine 141, cysteine 134–cysteine 145, and cysteine 140–cysteine 150.

This sequence belongs to the UPF0506 family.

The protein localises to the secreted. This chain is UPF0506 protein SJCHGC02965, found in Schistosoma japonicum (Blood fluke).